The primary structure comprises 86 residues: RNA-binding protein Hfq (86 aa).

A Sm domain is found at 12 to 73 (DIFLNQVRKE…ISTISPQKPV (62 aa)).

Belongs to the Hfq family. Homohexamer.

Functionally, RNA chaperone that binds small regulatory RNA (sRNAs) and mRNAs to facilitate mRNA translational regulation in response to envelope stress, environmental stress and changes in metabolite concentrations. Also binds with high specificity to tRNAs. The polypeptide is RNA-binding protein Hfq (Caldanaerobacter subterraneus subsp. tengcongensis (strain DSM 15242 / JCM 11007 / NBRC 100824 / MB4) (Thermoanaerobacter tengcongensis)).